The chain runs to 215 residues: MSSFDEQNTRLPSMTLVPMVVEQTSRGERAYDIYSRMLKERVIFLTGQVEEHMANLIVAQMLFLEAENPEKDIYLYINSPGGVITAGMSIYDTMQFITPDVSTICIGQACSMGAFLLAAGAKSKRYCLPNARVMIHQPLGGFQGQASDIEIHAKEILKVKKRMNDLMAIHTKKTLKIIEKDTERDHFLSAEEAKKYGLVDCVLTERKDVKNFSKK.

The active-site Nucleophile is the serine 111. Histidine 136 is a catalytic residue.

The protein belongs to the peptidase S14 family. As to quaternary structure, fourteen ClpP subunits assemble into 2 heptameric rings which stack back to back to give a disk-like structure with a central cavity, resembling the structure of eukaryotic proteasomes.

It localises to the cytoplasm. The enzyme catalyses Hydrolysis of proteins to small peptides in the presence of ATP and magnesium. alpha-casein is the usual test substrate. In the absence of ATP, only oligopeptides shorter than five residues are hydrolyzed (such as succinyl-Leu-Tyr-|-NHMec, and Leu-Tyr-Leu-|-Tyr-Trp, in which cleavage of the -Tyr-|-Leu- and -Tyr-|-Trp bonds also occurs).. Cleaves peptides in various proteins in a process that requires ATP hydrolysis. Has a chymotrypsin-like activity. Plays a major role in the degradation of misfolded proteins. This Hamiltonella defensa subsp. Acyrthosiphon pisum (strain 5AT) protein is ATP-dependent Clp protease proteolytic subunit.